Consider the following 388-residue polypeptide: Chorismate synthase (388 aa).

Arg-39 and Arg-45 together coordinate NADP(+). FMN contacts are provided by residues 130 to 132 (RSS), 251 to 252 (NA), Gly-296, 311 to 315 (KPIPT), and Arg-337.

The protein belongs to the chorismate synthase family. As to quaternary structure, homotetramer. The cofactor is FMNH2.

The enzyme catalyses 5-O-(1-carboxyvinyl)-3-phosphoshikimate = chorismate + phosphate. The protein operates within metabolic intermediate biosynthesis; chorismate biosynthesis; chorismate from D-erythrose 4-phosphate and phosphoenolpyruvate: step 7/7. In terms of biological role, catalyzes the anti-1,4-elimination of the C-3 phosphate and the C-6 proR hydrogen from 5-enolpyruvylshikimate-3-phosphate (EPSP) to yield chorismate, which is the branch point compound that serves as the starting substrate for the three terminal pathways of aromatic amino acid biosynthesis. This reaction introduces a second double bond into the aromatic ring system. This Lactococcus lactis subsp. cremoris (strain SK11) protein is Chorismate synthase.